The sequence spans 377 residues: Putative F-box protein At1g70380 (377 aa).

The region spanning 3–48 (NTSFETLALDMQIEILARLPLKYLMRCMCVSKKWASLIRGEDFRSA) is the F-box domain.

The protein is Putative F-box protein At1g70380 of Arabidopsis thaliana (Mouse-ear cress).